The chain runs to 260 residues: HLA class II histocompatibility antigen, DP alpha 1 chain (260 aa).

The signal sequence occupies residues Met-1 to Gly-28. The tract at residues Ala-29–Asn-115 is alpha-1. At Ala-29–Glu-222 the chain is on the extracellular side. N-linked (GlcNAc...) asparagine glycans are attached at residues Asn-109 and Asn-149. Residues Asp-116–Trp-209 are alpha-2. The Ig-like C1-type domain maps to Pro-118 to Glu-210. The cysteines at positions 138 and 194 are disulfide-linked. The segment at Glu-210–Glu-222 is connecting peptide. A helical transmembrane segment spans residues Thr-223–Ile-245. At Lys-246 to Leu-260 the chain is on the cytoplasmic side.

It belongs to the MHC class II family. As to quaternary structure, heterodimer of an alpha and a beta subunit; also referred as MHC class II molecule. In the endoplasmic reticulum (ER) it forms a heterononamer; 3 MHC class II molecules bind to a CD74 homotrimer (also known as invariant chain or HLA class II histocompatibility antigen gamma chain). In the endosomal/lysosomal system; CD74 undergoes sequential degradation by various proteases; leaving a small fragment termed CLIP on each MHC class II molecule. MHC class II molecule interacts with HLA_DM, and HLA_DO in B-cells, in order to release CLIP and facilitate the binding of antigenic peptides.

It localises to the cell membrane. Its subcellular location is the endoplasmic reticulum membrane. The protein resides in the golgi apparatus. The protein localises to the trans-Golgi network membrane. It is found in the endosome membrane. It localises to the lysosome membrane. Binds peptides derived from antigens that access the endocytic route of antigen presenting cells (APC) and presents them on the cell surface for recognition by the CD4 T-cells. The peptide binding cleft accommodates peptides of 10-30 residues. The peptides presented by MHC class II molecules are generated mostly by degradation of proteins that access the endocytic route, where they are processed by lysosomal proteases and other hydrolases. Exogenous antigens that have been endocytosed by the APC are thus readily available for presentation via MHC II molecules, and for this reason this antigen presentation pathway is usually referred to as exogenous. As membrane proteins on their way to degradation in lysosomes as part of their normal turn-over are also contained in the endosomal/lysosomal compartments, exogenous antigens must compete with those derived from endogenous components. Autophagy is also a source of endogenous peptides, autophagosomes constitutively fuse with MHC class II loading compartments. In addition to APCs, other cells of the gastrointestinal tract, such as epithelial cells, express MHC class II molecules and CD74 and act as APCs, which is an unusual trait of the GI tract. To produce a MHC class II molecule that presents an antigen, three MHC class II molecules (heterodimers of an alpha and a beta chain) associate with a CD74 trimer in the ER to form a heterononamer. Soon after the entry of this complex into the endosomal/lysosomal system where antigen processing occurs, CD74 undergoes a sequential degradation by various proteases, including CTSS and CTSL, leaving a small fragment termed CLIP (class-II-associated invariant chain peptide). The removal of CLIP is facilitated by HLA-DM via direct binding to the alpha-beta-CLIP complex so that CLIP is released. HLA-DM stabilizes MHC class II molecules until primary high affinity antigenic peptides are bound. The MHC II molecule bound to a peptide is then transported to the cell membrane surface. In B-cells, the interaction between HLA-DM and MHC class II molecules is regulated by HLA-DO. Primary dendritic cells (DCs) also to express HLA-DO. Lysosomal microenvironment has been implicated in the regulation of antigen loading into MHC II molecules, increased acidification produces increased proteolysis and efficient peptide loading. This is HLA class II histocompatibility antigen, DP alpha 1 chain (HLA-DPA1) from Homo sapiens (Human).